Here is a 262-residue protein sequence, read N- to C-terminus: Undecaprenyl-diphosphatase (262 aa).

8 consecutive transmembrane segments (helical) span residues 15 to 35, 38 to 58, 91 to 111, 114 to 134, 149 to 169, 189 to 209, 219 to 239, and 242 to 262; these read LTEW…IILL, SSAA…IVAF, LYIL…AKYV, IFGS…LLYS, ALIV…RSGA, FLLS…VSPA, VGLL…LSII, and GRLH…LSLL.

It belongs to the UppP family.

It localises to the cell membrane. The catalysed reaction is di-trans,octa-cis-undecaprenyl diphosphate + H2O = di-trans,octa-cis-undecaprenyl phosphate + phosphate + H(+). Its function is as follows. Catalyzes the dephosphorylation of undecaprenyl diphosphate (UPP). The polypeptide is Undecaprenyl-diphosphatase (Korarchaeum cryptofilum (strain OPF8)).